The following is a 207-amino-acid chain: Transcription factor DYT1 (207 aa).

The disordered stretch occupies residues 1–38; sequence MGGGSRFQEPVRMSRRKQVTKEKEEDENFKSPNLEAER. A bHLH domain is found at 28–77; the sequence is NFKSPNLEAERRRREKLHCRLMALRSHVPIVTNMTKASIVEDAITYIGEL.

In terms of assembly, homodimer. In terms of tissue distribution, mostly expressed in anthers, and, to a lower extent, in young inflorescences undergoing meiosis and siliques.

It localises to the nucleus. Transcription factor. Involved in the control of tapetum development. Required for male fertility and pollen differentiation, especially during callose deposition. The sequence is that of Transcription factor DYT1 from Arabidopsis thaliana (Mouse-ear cress).